We begin with the raw amino-acid sequence, 296 residues long: Urease accessory protein UreD (296 aa).

It belongs to the UreD family. In terms of assembly, ureD, UreF and UreG form a complex that acts as a GTP-hydrolysis-dependent molecular chaperone, activating the urease apoprotein by helping to assemble the nickel containing metallocenter of UreC. The UreE protein probably delivers the nickel.

The protein localises to the cytoplasm. In terms of biological role, required for maturation of urease via the functional incorporation of the urease nickel metallocenter. This is Urease accessory protein UreD from Janthinobacterium sp. (strain Marseille) (Minibacterium massiliensis).